The sequence spans 1043 residues: Glutamate receptor ionotropic, NMDA 3B (1043 aa).

The first 22 residues, 1-22, serve as a signal peptide directing secretion; it reads MEFVRALWLGLALALGPGSAGG. Residues 23 to 574 are Extracellular-facing; the sequence is HPQPCGVLAR…PIGAFMWPLH (552 aa). N-linked (GlcNAc...) asparagine glycans are attached at residues asparagine 69, asparagine 344, asparagine 451, and asparagine 465. Cystine bridges form between cysteine 439-cysteine 475 and cysteine 445-cysteine 476. Serine 531, serine 533, and arginine 538 together coordinate glycine. Serine 533 and arginine 538 together coordinate D-serine. Residues 575–594 traverse the membrane as a helical segment; it reads WSTWLGVFAALHLTALFLTV. The Cytoplasmic segment spans residues 595 to 615; the sequence is YEWRSPYGLTPRGRNRSTVFS. Positions 616–627 form an intramembrane region, discontinuously helical; sequence YSSALNLCYAIL. Over 628 to 641 the chain is Cytoplasmic; the sequence is FRRTVSSKTPKCPT. The helical transmembrane segment at 642 to 661 threads the bilayer; the sequence is GRLLMNLWAIFCLLVLSSYT. Topologically, residues 662-832 are extracellular; the sequence is ANLAAVMVGD…TLQMSIYHFA (171 aa). Residue serine 701 participates in glycine binding. 3 residues coordinate D-serine: serine 701, alanine 702, and aspartate 745. Aspartate 745 contributes to the glycine binding site. N-linked (GlcNAc...) asparagine glycosylation occurs at asparagine 786. Residues 833 to 848 form a helical membrane-spanning segment; the sequence is GLFVLLCLGLGSALLS. Over 849 to 1043 the chain is Cytoplasmic; the sequence is SLGEHAFFRL…PHSGRPGSQE (195 aa). 2 disordered regions span residues 882-924 and 1012-1043; these read ALNT…WKRA and GDSARHRPRRLLQARAAPAEAPPHSGRPGSQE. The involved in the trafficking and surface expression of NMDARs stretch occupies residues 979-1012; sequence QPGELQELERRIEVARERLRQALVRRGQLLAQLG. Residues 1024–1035 show a composition bias toward low complexity; it reads QARAAPAEAPPH.

Belongs to the glutamate-gated ion channel (TC 1.A.10.1) family. NR3B/GRIN3B subfamily. Forms heterotetrameric channels that contain at least two GluN1 subunits and at least a combination of one GluN2 and one GluN3 subunits (in vitro). Forms heterotetrameric channels composed of two GluN1/zeta subunits (GRIN1), and two identical GluN3 subunits (GRIN3A or GRIN3B) (in vitro). Does not form functional homomeric channels.

The protein resides in the cell membrane. Its subcellular location is the postsynaptic cell membrane. It catalyses the reaction Ca(2+)(in) = Ca(2+)(out). The catalysed reaction is Na(+)(in) = Na(+)(out). In terms of biological role, component of a non-conventional N-methyl-D-aspartate (NMDA) receptors (NMDARs) that function as heterotetrameric, ligand-gated cation channels with low calcium permeability and low voltage-dependent block by Mg(2+). Forms glutamatergic receptor complexes with GluN1 and GluN2 subunits which are activated by glycine binding to the GluN1 and GluN3 subunits and L-glutamate binding to GluN2 subunits. Forms excitatory glycinergic receptor complexes with GluN1 alone which are activated by glycine binding to the GluN1 and GluN3 subunits. GluN3B subunit also binds D-serine and, in the absence of glycine, activates glycinergic receptor complexes, but with lower efficacy than glycine. Each GluN3 subunit confers differential attributes to channel properties, including activation, deactivation and desensitization kinetics, pH sensitivity, Ca2(+) permeability, and binding to allosteric modulators. This Homo sapiens (Human) protein is Glutamate receptor ionotropic, NMDA 3B.